The sequence spans 334 residues: Glyceraldehyde-3-phosphate dehydrogenase 1 (334 aa).

NAD(+)-binding positions include 12–13 (RI), D35, and R79. D-glyceraldehyde 3-phosphate contacts are provided by residues 152-154 (SCT), T183, R198, 211-212 (SG), and R234. C153 functions as the Nucleophile in the catalytic mechanism. Residue N315 participates in NAD(+) binding.

Belongs to the glyceraldehyde-3-phosphate dehydrogenase family. Homotetramer.

The protein resides in the cytoplasm. It carries out the reaction D-glyceraldehyde 3-phosphate + phosphate + NAD(+) = (2R)-3-phospho-glyceroyl phosphate + NADH + H(+). It participates in carbohydrate degradation; glycolysis; pyruvate from D-glyceraldehyde 3-phosphate: step 1/5. Resistant to pentalenolactone. Functionally, catalyzes the oxidative phosphorylation of glyceraldehyde 3-phosphate (G3P) to 1,3-bisphosphoglycerate (BPG) using the cofactor NAD. The first reaction step involves the formation of a hemiacetal intermediate between G3P and a cysteine residue, and this hemiacetal intermediate is then oxidized to a thioester, with concomitant reduction of NAD to NADH. The reduced NADH is then exchanged with the second NAD, and the thioester is attacked by a nucleophilic inorganic phosphate to produce BPG. In Streptomyces avermitilis (strain ATCC 31267 / DSM 46492 / JCM 5070 / NBRC 14893 / NCIMB 12804 / NRRL 8165 / MA-4680), this protein is Glyceraldehyde-3-phosphate dehydrogenase 1 (gap1).